A 203-amino-acid chain; its full sequence is Probable nicotinate-nucleotide adenylyltransferase (203 aa).

Belongs to the NadD family.

It catalyses the reaction nicotinate beta-D-ribonucleotide + ATP + H(+) = deamido-NAD(+) + diphosphate. The protein operates within cofactor biosynthesis; NAD(+) biosynthesis; deamido-NAD(+) from nicotinate D-ribonucleotide: step 1/1. Its function is as follows. Catalyzes the reversible adenylation of nicotinate mononucleotide (NaMN) to nicotinic acid adenine dinucleotide (NaAD). The chain is Probable nicotinate-nucleotide adenylyltransferase from Prosthecochloris aestuarii (strain DSM 271 / SK 413).